The primary structure comprises 209 residues: Protein-L-isoaspartate O-methyltransferase (209 aa).

S59 is an active-site residue.

Belongs to the methyltransferase superfamily. L-isoaspartyl/D-aspartyl protein methyltransferase family.

It localises to the cytoplasm. It catalyses the reaction [protein]-L-isoaspartate + S-adenosyl-L-methionine = [protein]-L-isoaspartate alpha-methyl ester + S-adenosyl-L-homocysteine. In terms of biological role, catalyzes the methyl esterification of L-isoaspartyl residues in peptides and proteins that result from spontaneous decomposition of normal L-aspartyl and L-asparaginyl residues. It plays a role in the repair and/or degradation of damaged proteins. The protein is Protein-L-isoaspartate O-methyltransferase of Helicobacter pylori (strain G27).